We begin with the raw amino-acid sequence, 255 residues long: Coniferyl-alcohol dehydrogenase (255 aa).

NAD(+)-binding positions include 12–17, Asp-36, 51–52, and Gly-77; these read GVSSGI and DL. A substrate-binding site is contributed by Ser-117. Tyr-157 and Lys-161 together coordinate NAD(+). The active-site Proton acceptor is Tyr-157.

It belongs to the short-chain dehydrogenases/reductases (SDR) family.

It catalyses the reaction (E)-coniferol + NADP(+) = (E)-coniferaldehyde + NADPH + H(+). Its function is as follows. Catalyzes the conversion of coniferyl alcohol into coniferyl aldehyde in the eugenol degradation pathway. Specific for coniferyl alcohol; does not act on cinnamyl alcohol, 4-coumaryl alcohol or sinapyl alcohol. This chain is Coniferyl-alcohol dehydrogenase (calA), found in Pseudomonas sp. (strain HR199 / DSM 7063).